A 472-amino-acid polypeptide reads, in one-letter code: Ribulose bisphosphate carboxylase large chain 1 (472 aa).

Substrate contacts are provided by Asn-115 and Thr-165. Lys-167 (proton acceptor) is an active-site residue. Lys-169 serves as a coordination point for substrate. 3 residues coordinate Mg(2+): Lys-193, Asp-195, and Glu-196. Position 193 is an N6-carboxylysine (Lys-193). Catalysis depends on His-286, which acts as the Proton acceptor. Positions 287, 319, and 371 each coordinate substrate.

Belongs to the RuBisCO large chain family. Type I subfamily. As to quaternary structure, heterohexadecamer of 8 large chains and 8 small chains. Requires Mg(2+) as cofactor.

The enzyme catalyses 2 (2R)-3-phosphoglycerate + 2 H(+) = D-ribulose 1,5-bisphosphate + CO2 + H2O. It carries out the reaction D-ribulose 1,5-bisphosphate + O2 = 2-phosphoglycolate + (2R)-3-phosphoglycerate + 2 H(+). RuBisCO catalyzes two reactions: the carboxylation of D-ribulose 1,5-bisphosphate, the primary event in carbon dioxide fixation, as well as the oxidative fragmentation of the pentose substrate. Both reactions occur simultaneously and in competition at the same active site. The chain is Ribulose bisphosphate carboxylase large chain 1 from Rhodopseudomonas palustris (strain BisB5).